Consider the following 367-residue polypeptide: Septin-1 (367 aa).

The region spanning 22–296 is the Septin-type G domain; sequence KGFDFTLMVA…EGYRARCLQS (275 aa). The interval 32-39 is G1 motif; the sequence is GESGLGKS. Residues 32-39, T66, G92, and 171-179 contribute to the GTP site; these read GESGLGKS and KADALMPKE. The interval 89–92 is G3 motif; that stretch reads DTPG. The interval 170-173 is G4 motif; that stretch reads GKAD. S206 bears the Phosphoserine mark. G229 and R245 together coordinate GTP. Phosphoserine; by AURKB is present on S248. T251 is subject to Phosphothreonine. Phosphoserine; by AURKB occurs at positions 307 and 315.

The protein belongs to the TRAFAC class TrmE-Era-EngA-EngB-Septin-like GTPase superfamily. Septin GTPase family. Septins polymerize into heterooligomeric protein complexes that form filaments, and can associate with cellular membranes, actin filaments and microtubules. GTPase activity is required for filament formation. Interacts with AURKB.

The protein localises to the cytoplasm. The protein resides in the cytoskeleton. Its subcellular location is the microtubule organizing center. It localises to the centrosome. It is found in the midbody. Functionally, filament-forming cytoskeletal GTPase. May play a role in cytokinesis (Potential). In Bos taurus (Bovine), this protein is Septin-1.